We begin with the raw amino-acid sequence, 783 residues long: DNA ligase (783 aa).

Residues 42-46 (DAEYD), 91-92 (SL), and glutamate 125 contribute to the NAD(+) site. Residue lysine 127 is the N6-AMP-lysine intermediate of the active site. The NAD(+) site is built by arginine 148, glutamate 185, lysine 302, and lysine 326. 4 residues coordinate Zn(2+): cysteine 421, cysteine 423, cysteine 445, and cysteine 451. Positions 705 to 783 (KTDTAVAGKT…EDEWLELVAG (79 aa)) constitute a BRCT domain.

It belongs to the NAD-dependent DNA ligase family. LigA subfamily. Mg(2+) is required as a cofactor. Mn(2+) serves as cofactor.

The enzyme catalyses NAD(+) + (deoxyribonucleotide)n-3'-hydroxyl + 5'-phospho-(deoxyribonucleotide)m = (deoxyribonucleotide)n+m + AMP + beta-nicotinamide D-nucleotide.. Its function is as follows. DNA ligase that catalyzes the formation of phosphodiester linkages between 5'-phosphoryl and 3'-hydroxyl groups in double-stranded DNA using NAD as a coenzyme and as the energy source for the reaction. It is essential for DNA replication and repair of damaged DNA. The protein is DNA ligase of Caulobacter vibrioides (strain ATCC 19089 / CIP 103742 / CB 15) (Caulobacter crescentus).